The chain runs to 233 residues: MVHRPRLLCLHGGGASSQIMRIQFSKLESALRKTFQLVFLEGPLDSAPGPGVLPFFKDFGPYSCWVSDDRSLSPEEKRQEETNAIAYIKTFMLQYGPFAGILGFSQGARAAASILLEQQREAFTHDSLFGVFFCGTFPPFIPDAPDISLPTIHVLGLTDPYLRESEVLLEHCTQQSVRRVIKFNGGHHMPTSSDVTQQIADVISMTYRTSQRKRVSGIWKKNVVDSRPSALEI.

Residues serine 105, aspartate 159, and histidine 187 each act as charge relay system in the active site.

Belongs to the LovG family.

Its function is as follows. Esterase; part of the gene cluster that mediates the biosynthesis of the mycotoxin fusarin C. Within the cluster, FUS1, FUS2, FUS8 and FUS9 are sufficient for fusarin production. The other FUS cluster members are not essential for fusarin C biosynthesis. This is Esterase FUS5 from Gibberella moniliformis (strain M3125 / FGSC 7600) (Maize ear and stalk rot fungus).